The sequence spans 235 residues: Large ribosomal subunit protein uL1 (235 aa).

It belongs to the universal ribosomal protein uL1 family. In terms of assembly, part of the 50S ribosomal subunit.

Functionally, binds directly to 23S rRNA. The L1 stalk is quite mobile in the ribosome, and is involved in E site tRNA release. In terms of biological role, protein L1 is also a translational repressor protein, it controls the translation of the L11 operon by binding to its mRNA. The polypeptide is Large ribosomal subunit protein uL1 (Paenarthrobacter aurescens (strain TC1)).